The primary structure comprises 507 residues: Cytochrome P450 monooxygenase tpeC (507 aa).

The chain crosses the membrane as a helical span at residues 24–44 (TLAIALIVGFVILKAIYNVFF). Cys-449 lines the heme pocket.

Belongs to the cytochrome P450 family. Requires heme as cofactor.

The protein resides in the membrane. Its pathway is secondary metabolite biosynthesis. Its function is as follows. Cytochrome P450 monooxygenase; part of the gene cluster that mediates the biosynthesis of polyesters containing 2,4-dihydroxy-6-(2-hydroxypropyl)benzoate and 3-hydroxybutyrate moieties, such as talapolyester G, 15G256beta and 15G256beta-2; as well as to oxidized derivatives such as 15G256alpha. The biosynthesis of the polyesters probably starts with the formation of the diketide 3-hydroxybutyryl-S-ACP catalyzed by the partially reducing polyketide synthase tpeA. The acceptance of 3-hydroxybutyryl by the non-reducing polyketide synthase tpeB would initiate further elongation and cyclization, catalyzed by KS and PT, respectively, to form 2,4-dihydroxy-6-(2-hydroxyn-propyl)benzoyl-S-ACP intermediate. The TE domain could catalyze lactonization at this step to yield 6-hydroxymellein as a derailment product. The polyesterification process maybe occurs when additional molecules of 3-hydroxybutyryl are transferred to tpeB. Following the first esterification step, an intramolecular cyclization catalyzed by the TE domain of tpeB would give talarodioxadione 1, whereas the ethyl esterification of talapolyester G perhaps happens spontaneously. Further oxidation by the cytochrome P450 monooxygenase tpeC then leads to the formation of oxidized derivatives. This Talaromyces stipitatus (strain ATCC 10500 / CBS 375.48 / QM 6759 / NRRL 1006) (Penicillium stipitatum) protein is Cytochrome P450 monooxygenase tpeC.